Consider the following 143-residue polypeptide: 3-dehydroquinate dehydratase (143 aa).

The active-site Proton acceptor is the Tyr22. Substrate contacts are provided by Asn73, His79, and Asp86. His99 (proton donor) is an active-site residue. Residues 100–101 (IS) and Arg110 contribute to the substrate site.

It belongs to the type-II 3-dehydroquinase family. In terms of assembly, homododecamer.

The catalysed reaction is 3-dehydroquinate = 3-dehydroshikimate + H2O. The protein operates within metabolic intermediate biosynthesis; chorismate biosynthesis; chorismate from D-erythrose 4-phosphate and phosphoenolpyruvate: step 3/7. Catalyzes a trans-dehydration via an enolate intermediate. The polypeptide is 3-dehydroquinate dehydratase (Mycolicibacterium paratuberculosis (strain ATCC BAA-968 / K-10) (Mycobacterium paratuberculosis)).